The following is a 268-amino-acid chain: 4-hydroxy-tetrahydrodipicolinate reductase (268 aa).

NAD(+) contacts are provided by residues 10-15 (GASGRM), D36, 99-101 (GTT), and 123-126 (APNM). The active-site Proton donor/acceptor is H156. H157 is a (S)-2,3,4,5-tetrahydrodipicolinate binding site. The active-site Proton donor is K160. 166 to 167 (GT) is a (S)-2,3,4,5-tetrahydrodipicolinate binding site.

Belongs to the DapB family.

It localises to the cytoplasm. It carries out the reaction (S)-2,3,4,5-tetrahydrodipicolinate + NAD(+) + H2O = (2S,4S)-4-hydroxy-2,3,4,5-tetrahydrodipicolinate + NADH + H(+). The catalysed reaction is (S)-2,3,4,5-tetrahydrodipicolinate + NADP(+) + H2O = (2S,4S)-4-hydroxy-2,3,4,5-tetrahydrodipicolinate + NADPH + H(+). It participates in amino-acid biosynthesis; L-lysine biosynthesis via DAP pathway; (S)-tetrahydrodipicolinate from L-aspartate: step 4/4. In terms of biological role, catalyzes the conversion of 4-hydroxy-tetrahydrodipicolinate (HTPA) to tetrahydrodipicolinate. This Janthinobacterium sp. (strain Marseille) (Minibacterium massiliensis) protein is 4-hydroxy-tetrahydrodipicolinate reductase.